Here is a 376-residue protein sequence, read N- to C-terminus: uncharacterized protein (376 aa).

This sequence belongs to the YCR102c/YLR460c/YNL134c family.

This is an uncharacterized protein from Saccharomyces cerevisiae (strain ATCC 204508 / S288c) (Baker's yeast).